Here is a 197-residue protein sequence, read N- to C-terminus: uncharacterized protein (197 aa).

A run of 6 helical transmembrane segments spans residues 5–23 (LNLL…GLRF), 27–46 (ISFA…MLRF), 55–77 (VIAG…LAYT), 87–109 (LSLL…VIRI), 116–138 (VFAF…LPTG), and 153–174 (FVEF…CLVF).

It is found in the cell membrane. This is an uncharacterized protein from Archaeoglobus fulgidus (strain ATCC 49558 / DSM 4304 / JCM 9628 / NBRC 100126 / VC-16).